Here is a 272-residue protein sequence, read N- to C-terminus: 3-methyl-2-oxobutanoate hydroxymethyltransferase (272 aa).

Asp-42 and Asp-86 together coordinate Mg(2+). 3-methyl-2-oxobutanoate-binding positions include 42-43 (DS), Asp-86, and Lys-116. Glu-118 provides a ligand contact to Mg(2+). Residue Glu-185 is the Proton acceptor of the active site.

Belongs to the PanB family. In terms of assembly, homodecamer; pentamer of dimers. The cofactor is Mg(2+).

Its subcellular location is the cytoplasm. It catalyses the reaction 3-methyl-2-oxobutanoate + (6R)-5,10-methylene-5,6,7,8-tetrahydrofolate + H2O = 2-dehydropantoate + (6S)-5,6,7,8-tetrahydrofolate. It participates in cofactor biosynthesis; (R)-pantothenate biosynthesis; (R)-pantoate from 3-methyl-2-oxobutanoate: step 1/2. Functionally, catalyzes the reversible reaction in which hydroxymethyl group from 5,10-methylenetetrahydrofolate is transferred onto alpha-ketoisovalerate to form ketopantoate. This Prochlorococcus marinus (strain MIT 9303) protein is 3-methyl-2-oxobutanoate hydroxymethyltransferase.